The chain runs to 535 residues: GMP synthase [glutamine-hydrolyzing] (535 aa).

Positions Lys-4–Asp-210 constitute a Glutamine amidotransferase type-1 domain. Cys-85 serves as the catalytic Nucleophile. Active-site residues include His-184 and Glu-186. Residues Trp-211–Arg-403 enclose the GMPS ATP-PPase domain. Ser-238–Ser-244 provides a ligand contact to ATP.

Homodimer.

The enzyme catalyses XMP + L-glutamine + ATP + H2O = GMP + L-glutamate + AMP + diphosphate + 2 H(+). The protein operates within purine metabolism; GMP biosynthesis; GMP from XMP (L-Gln route): step 1/1. In terms of biological role, catalyzes the synthesis of GMP from XMP. This is GMP synthase [glutamine-hydrolyzing] from Polynucleobacter necessarius subsp. necessarius (strain STIR1).